Reading from the N-terminus, the 280-residue chain is Protein IMPACT homolog (280 aa).

The RWD domain occupies 9-109 (DELLALESIY…QAAAERESKL (101 aa)).

Belongs to the IMPACT family. As to quaternary structure, interacts (via N-terminus) with gcn1 (via C-terminus); this interaction reduces the gcn1-gcn20 complex formation and prevents the interaction of gcn1 with gcn2 protein kinase and gcn2 activation in amino acid-starved cells. Interacts (via C-terminus) with act1; this interaction occurs in a gcn1-independent manner. Interacts with rpl39; this interaction occurs in a gcn1-independent manner. Associates (via middle region) with ribosomes; this association occurs in a gcn1-independent manner and persists under amino acid starvation conditions.

Its subcellular location is the cytoplasm. The protein resides in the nucleus. Functionally, translational regulator that ensures constant high levels of translation under amino acid starvation. Plays a role as a negative regulator of the gcn2 kinase activity; impairs gcn1-mediated gcn2 activation, and hence gcn2-mediated eIF-2-alpha phosphorylation in amino acid-starved cells and subsequent down-regulation of protein synthesis. In normal conditions, it resides in a actin complex and has no activity. This chain is Protein IMPACT homolog (yih1), found in Schizosaccharomyces pombe (strain 972 / ATCC 24843) (Fission yeast).